The chain runs to 305 residues: MKYKVMFFGTPEIAKIVLETLFNMHEVDLIAVVSQPDAHFDRKKNVIYSPVKQFCLDHNIKLFQPEKIKEIEEEIRILGPDIIITCAFGQFINQGIIDIPKYKIVNIHASLLPKLRGGAPIHYAILNGELKTGITLMHTIKKMDAGNILFQRSLEINDCTTTKSLTLELANLSALMIKEHFLELVKPNLVGIQQDENSVSFAYNIQKDQNIINFDQPAFFINRFVNAMYDKPIAIMQYNGVSIKVYQVKITNQKSCQKPGTIMIFKNQLFVSTQDFDIELLLIQLPNKKPLSPKVLLNGKNPFIN.

Residue 110–113 (SLLP) coordinates (6S)-5,6,7,8-tetrahydrofolate.

It belongs to the Fmt family.

It carries out the reaction L-methionyl-tRNA(fMet) + (6R)-10-formyltetrahydrofolate = N-formyl-L-methionyl-tRNA(fMet) + (6S)-5,6,7,8-tetrahydrofolate + H(+). Functionally, attaches a formyl group to the free amino group of methionyl-tRNA(fMet). The formyl group appears to play a dual role in the initiator identity of N-formylmethionyl-tRNA by promoting its recognition by IF2 and preventing the misappropriation of this tRNA by the elongation apparatus. This Ureaplasma parvum serovar 3 (strain ATCC 700970) protein is Methionyl-tRNA formyltransferase.